The primary structure comprises 311 residues: uncharacterized protein (311 aa).

This is an uncharacterized protein from Sinorhizobium fredii (strain NBRC 101917 / NGR234).